The sequence spans 201 residues: 3-isopropylmalate dehydratase small subunit (201 aa).

This sequence belongs to the LeuD family. LeuD type 1 subfamily. Heterodimer of LeuC and LeuD.

It carries out the reaction (2R,3S)-3-isopropylmalate = (2S)-2-isopropylmalate. Its pathway is amino-acid biosynthesis; L-leucine biosynthesis; L-leucine from 3-methyl-2-oxobutanoate: step 2/4. Functionally, catalyzes the isomerization between 2-isopropylmalate and 3-isopropylmalate, via the formation of 2-isopropylmaleate. This chain is 3-isopropylmalate dehydratase small subunit, found in Shigella boydii serotype 18 (strain CDC 3083-94 / BS512).